The chain runs to 1164 residues: Avirulence protein AvrBs3 (1164 aa).

2 disordered regions span residues 1–68 (MDPI…SAGS) and 128–152 (ARPP…PAAQ). Positions 131 to 141 (PRAKPAPRRRA) are enriched in basic residues. The span at 142–151 (AQPSDASPAA) shows a compositional bias: low complexity. Residues 225–254 (IVGVGKQWSGARALEALLTVAGELRGPPLQ) form a Cryptic repeat -1 repeat. The stretch at 255-288 (LDTGQLLKIAKRGGVTAVEAVHAWRNALTGAPLN) is one Cryptic repeat 0 repeat. 17 Core repeat repeats span residues 289 to 322 (LTPE…QAHG), 323 to 356 (LTPQ…QAHG), 357 to 390 (LTPQ…QAHG), 391 to 424 (LTPE…QAHG), 425 to 458 (LTPE…QAHG), 459 to 492 (LTPE…QAHG), 493 to 526 (LTPE…QAHG), 527 to 560 (LTPE…QAHG), 561 to 594 (LTPE…QAHG), 595 to 628 (LTPQ…QAHG), 629 to 662 (LTPE…QAHG), 663 to 696 (LTPE…QAHG), 697 to 730 (LTPE…QAHG), 731 to 764 (LTPE…QAHG), 765 to 798 (LTPE…QAHG), 799 to 832 (LTPQ…QAHG), and 833 to 866 (LTPE…QAHG). The Core repeat 17.5 repeat unit spans residues 867–886 (LTPQQVVAIASNGGGRPALE). Positions 1021-1024 (KRAK) match the Nuclear localization signal NLS1 motif. A compositionally biased stretch (basic and acidic residues) spans 1048-1060 (DLDAPSPMHEGDQ). Residues 1048–1091 (DLDAPSPMHEGDQTRASSRKRSRSDRAVTGPSAQQSFEVRVPEQ) are disordered. The Nuclear localization signal NLS2 signature appears at 1067-1070 (KRSR). A Nuclear localization signal NLS3 motif is present at residues 1104–1107 (KRPR). An acidic activation domain AAD region spans residues 1135-1164 (QDEDPFAGAADDFPAFNEEELAWLMELLPQ).

The protein belongs to the transcription activator-like effector (TALE) family. As to quaternary structure, forms a homodimer in the plant cell cytoplasm, prior to nuclear import. Interacts with the plant cell importin alpha-1 (Caimp alpha-1) and importin alpha-2 (Caimp alpha-2) via the nuclear localization signal NLS2, but not via NLS3.

The protein localises to the secreted. The protein resides in the host nucleus. In terms of biological role, avirulence protein. Acts as a transcription factor in C.annuum plants. In susceptible plants lacking the Bs3 resistance gene induces expression of a number of genes, including genes homologous to a family of auxin-induced genes, alpha-expansin genes, pectate lyase, anthocyanidin glucoside rhamnosyl transferase and at least one transcription factor, UPA20. Their expression leads to plant hypertrophy in mesophyll cells, probably mainly mediated by UPA20. In resistant plants induces the hypersensitive response (HR), by inducing transcription of plant Bs3 which induces HR; a mutated AvrBs3 missing repeats 11-14 does not induce expression of Bs3 but does induce Bs3-E, a Bs3 allele with a modified promoter. Binds DNA corresponding to the upa-box in sequence-specific manner. The chain is Avirulence protein AvrBs3 (avrBs3) from Xanthomonas euvesicatoria.